The following is a 287-amino-acid chain: Survival motor neuron protein (287 aa).

The segment at 1–27 is disordered; sequence MGGGGGLPEPEDSVLFRRGTGQSDDSD. Residues 8 to 39 are P1 (binding site for GEMIN2); it reads PEPEDSVLFRRGTGQSDDSDIWDDTALIKAYD. Position 20 is a phosphothreonine (T20). Residues S23 and S26 each carry the phosphoserine modification. K46 participates in a covalent cross-link: Glycyl lysine isopeptide (Lys-Gly) (interchain with G-Cter in SUMO2). Residues 52–83 form a disordered region; that stretch reads GDISEASDKPKSTPKRKPAKKNKSQKKNATTA. Over residues 63 to 77 the composition is skewed to basic residues; that stretch reads STPKRKPAKKNKSQK. T64 is modified (phosphothreonine). Residues 86-146 form the Tudor domain; sequence QWKVGDKCSA…LSPACEVANN (61 aa). Positions 92-205 are required for interaction with RPP20/POP7; the sequence is KCSAVWSEDG…MSGSGLGPGK (114 aa). The interval 148-216 is disordered; the sequence is EQDTQENENE…GVKFSGPPPP (69 aa). The segment covering 157 to 180 has biased composition (polar residues); the sequence is ESQISTDESENSSRSPGNKPNNIK. A Glycyl lysine isopeptide (Lys-Gly) (interchain with G-Cter in SUMO2) cross-link involves residue K205. The segment at 234–261 is P2 (binding site for SM B); the sequence is PPIIPPPPPICPDSLDDADALGSMLISW. The interval 273–287 is required for interaction with SYNCRIP; the sequence is GFKQNQKEGRCSHFN.

It belongs to the SMN family. Homooligomer; may form higher order homooligomers in the dimer to octamer range. Part of the core SMN complex that contains SMN1, GEMIN2/SIP1, DDX20/GEMIN3, GEMIN4, GEMIN5, GEMIN6, GEMIN7, GEMIN8 and STRAP/UNRIP. Part of the SMN-Sm complex that contains SMN1, GEMIN2/SIP1, DDX20/GEMIN3, GEMIN4, GEMIN5, GEMIN6, GEMIN7, GEMIN8, STRAP/UNRIP and the Sm proteins SNRPB, SNRPD1, SNRPD2, SNRPD3, SNRPE, SNRPF and SNRPG. Component of an import snRNP complex composed of KPNB1, RNUT1, SMN1 and ZNF259. Interacts with DDX20, FBL, NOLA1, RNUT1, SYNCRIP and with several spliceosomal snRNP core Sm proteins, including SNRPB, SNRPD1, SNRPD2, SNRPD3, SNRPE and ILF3. Interacts with GEMIN2; the interaction is direct. Interacts with GEMIN3; the interaction is direct. Interacts with GEMIN8; the interaction is direct. Interacts with SNRPB; the interaction is direct. Interacts (via Tudor domain) with SNRPD1 (via C-terminus); the interaction is direct. Interacts with SNRPD2; the interaction is direct. Interacts (via Tudor domain) with SNRPD3 (via C-terminus); the interaction is direct. Interacts with SNRPE; the interaction is direct. Interacts with OSTF1, LSM10, LSM11 and RPP20/POP7. Interacts (via C-terminal region) with ZPR1 (via C-terminal region). Interacts (via Tudor domain) with COIL. Interacts with SETX; recruits SETX to POLR2A. Interacts with POLR2A (via the C-terminal domain (CTD)). Interacts with PRMT5. Interacts with XRN2. Interacts (via C-terminus) with FMR1 (via C-terminus); the interaction is direct and occurs in a RNA-independent manner. Interacts (via Tudor domain) with SF3B2 ('Arg-508'-methylated form). Interacts with WRAP53/TCAB1. Interacts (via Tudor domain) with ELAVL4 in an RNA-independent manner; the interaction is required for localization of ELAVL4 to RNA granules. Interacts with FRG1.

The protein localises to the nucleus. The protein resides in the gem. It localises to the cajal body. Its subcellular location is the cytoplasm. It is found in the cytoplasmic granule. The protein localises to the perikaryon. The protein resides in the cell projection. It localises to the neuron projection. Its subcellular location is the axon. It is found in the myofibril. The protein localises to the sarcomere. The protein resides in the z line. In terms of biological role, the SMN complex catalyzes the assembly of small nuclear ribonucleoproteins (snRNPs), the building blocks of the spliceosome, and thereby plays an important role in the splicing of cellular pre-mRNAs. Most spliceosomal snRNPs contain a common set of Sm proteins SNRPB, SNRPD1, SNRPD2, SNRPD3, SNRPE, SNRPF and SNRPG that assemble in a heptameric protein ring on the Sm site of the small nuclear RNA to form the core snRNP (Sm core). In the cytosol, the Sm proteins SNRPD1, SNRPD2, SNRPE, SNRPF and SNRPG are trapped in an inactive 6S pICln-Sm complex by the chaperone CLNS1A that controls the assembly of the core snRNP. To assemble core snRNPs, the SMN complex accepts the trapped 5Sm proteins from CLNS1A forming an intermediate. Binding of snRNA inside 5Sm ultimately triggers eviction of the SMN complex, thereby allowing binding of SNRPD3 and SNRPB to complete assembly of the core snRNP. Within the SMN complex, SMN1 acts as a structural backbone and together with GEMIN2 it gathers the Sm complex subunits. Ensures the correct splicing of U12 intron-containing genes that may be important for normal motor and proprioceptive neurons development. Also required for resolving RNA-DNA hybrids created by RNA polymerase II, that form R-loop in transcription terminal regions, an important step in proper transcription termination. May also play a role in the metabolism of small nucleolar ribonucleoprotein (snoRNPs). This is Survival motor neuron protein (SMN1) from Canis lupus familiaris (Dog).